Here is a 311-residue protein sequence, read N- to C-terminus: HPr kinase/phosphorylase (311 aa).

Catalysis depends on residues His-138 and Lys-159. Residue 153–160 (GDSGIGKS) participates in ATP binding. Residue Ser-160 coordinates Mg(2+). The Proton acceptor; for phosphorylation activity. Proton donor; for dephosphorylation activity role is filled by Asp-177. The tract at residues 201-210 (IEIRGVGIID) is important for the catalytic mechanism of both phosphorylation and dephosphorylation. Mg(2+) is bound at residue Glu-202. Arg-243 is a catalytic residue. The segment at 264-269 (PVKTGR) is important for the catalytic mechanism of dephosphorylation.

Belongs to the HPrK/P family. In terms of assembly, homohexamer. Requires Mg(2+) as cofactor.

The enzyme catalyses [HPr protein]-L-serine + ATP = [HPr protein]-O-phospho-L-serine + ADP + H(+). The catalysed reaction is [HPr protein]-O-phospho-L-serine + phosphate + H(+) = [HPr protein]-L-serine + diphosphate. In terms of biological role, catalyzes the ATP- as well as the pyrophosphate-dependent phosphorylation of a specific serine residue in HPr, a phosphocarrier protein of the phosphoenolpyruvate-dependent sugar phosphotransferase system (PTS). HprK/P also catalyzes the pyrophosphate-producing, inorganic phosphate-dependent dephosphorylation (phosphorolysis) of seryl-phosphorylated HPr (P-Ser-HPr). The two antagonistic activities of HprK/P are regulated by several intracellular metabolites, which change their concentration in response to the absence or presence of rapidly metabolisable carbon sources (glucose, fructose, etc.) in the growth medium. Therefore, by controlling the phosphorylation state of HPr, HPrK/P is a sensor enzyme that plays a major role in the regulation of carbon metabolism and sugar transport: it mediates carbon catabolite repression (CCR), and regulates PTS-catalyzed carbohydrate uptake and inducer exclusion. This Streptococcus pneumoniae serotype 2 (strain D39 / NCTC 7466) protein is HPr kinase/phosphorylase.